The primary structure comprises 265 residues: Ribosomal RNA small subunit methyltransferase A (265 aa).

Residues His-13, Leu-15, Gly-40, Glu-61, Asp-85, and Asn-103 each contribute to the S-adenosyl-L-methionine site.

Belongs to the class I-like SAM-binding methyltransferase superfamily. rRNA adenine N(6)-methyltransferase family. RsmA subfamily.

It is found in the cytoplasm. It carries out the reaction adenosine(1518)/adenosine(1519) in 16S rRNA + 4 S-adenosyl-L-methionine = N(6)-dimethyladenosine(1518)/N(6)-dimethyladenosine(1519) in 16S rRNA + 4 S-adenosyl-L-homocysteine + 4 H(+). Functionally, specifically dimethylates two adjacent adenosines (A1518 and A1519) in the loop of a conserved hairpin near the 3'-end of 16S rRNA in the 30S particle. May play a critical role in biogenesis of 30S subunits. The sequence is that of Ribosomal RNA small subunit methyltransferase A from Bordetella pertussis (strain Tohama I / ATCC BAA-589 / NCTC 13251).